The following is a 1962-amino-acid chain: Sodium channel protein type 10 subunit alpha (1962 aa).

The Cytoplasmic portion of the chain corresponds to 1–125; that stretch reads MEFPFGSLET…FNLIRRTAIK (125 aa). Residues 32-56 form a disordered region; sequence QAAKKAKGKHREQKDQEEKPRPQLD. A compositionally biased stretch (basic residues) spans 33–42; that stretch reads AAKKAKGKHR. Residues 43–55 are compositionally biased toward basic and acidic residues; that stretch reads EQKDQEEKPRPQL. One copy of the I repeat lies at 116-414; the sequence is FNLIRRTAIK…VTMAYEEQNQ (299 aa). The helical transmembrane segment at 126–149 threads the bilayer; the sequence is VSVHSWFSLFITVTILVNCVGMTQ. Residues 150–154 are Extracellular-facing; that stretch reads TELPD. A helical transmembrane segment spans residues 155–174; it reads RIEYVFTVIYTFEALIKILA. The Cytoplasmic portion of the chain corresponds to 175–187; that stretch reads RGFCLNEFAYLRD. A helical membrane pass occupies residues 188–206; sequence PWDWLDFSVITLAYIGEAT. The Extracellular segment spans residues 207–212; the sequence is ALRGIS. Residues 213 to 232 traverse the membrane as a helical; Voltage-sensor segment; that stretch reads GLRTFRVLRALKTVSVIPGL. Over 233–248 the chain is Cytoplasmic; sequence KVIVGALIHSVRKLAD. Residues 249-272 traverse the membrane as a helical segment; sequence VTILTVFCLSVFALVGLQLFKGNL. Topologically, residues 273–350 are extracellular; that stretch reads KNKCVKNCAA…PDFNYTSFDS (78 aa). Residues Cys-276 and Cys-328 are joined by a disulfide bond. N-linked (GlcNAc...) asparagine glycosylation is found at Asn-284, Asn-288, Asn-321, and Asn-344. The pore-forming intramembrane region spans 351–375; sequence FAWAFLSLFRLMTQDSWERLYQQTL. Topologically, residues 376 to 382 are extracellular; sequence RASGKMY. A helical membrane pass occupies residues 383–408; that stretch reads MVFFVLVIFLGSFYLVNLILAVVTMA. At 409–668 the chain is on the cytoplasmic side; it reads YEEQNQATID…TWVKLKTVLF (260 aa). Phosphoserine occurs at positions 450, 453, 476, and 488. The span at 452-463 shows a compositional bias: polar residues; it reads HSCNGSPLPSKN. Disordered regions lie at residues 452-493 and 521-586; these read HSCN…PYNQ and LDTS…TGEL. Phosphoserine occurs at positions 621 and 624. The stretch at 656 to 920 is one II repeat; it reads CCPTWVKLKT…DEDGEVNNLQ (265 aa). Residues 669 to 693 form a helical membrane-spanning segment; sequence GIVTDPFAELTTTLCIVVNTVFMAM. At 694-704 the chain is on the extracellular side; it reads EHHGMSSAFEA. Residues 705–728 form a helical membrane-spanning segment; the sequence is MLQIGNIVFTVFFTAEMVFKIIAF. At 729–736 the chain is on the cytoplasmic side; the sequence is DPYYYFQK. Residues 737 to 756 form a helical membrane-spanning segment; the sequence is RWNIFDCIIVTVSLIELGAA. Over 757–762 the chain is Extracellular; that stretch reads RKGSLS. The chain crosses the membrane as a helical; Voltage-sensor span at residues 763-782; it reads VLRTFRLLRVFKLAKSWPTL. At 783–798 the chain is on the cytoplasmic side; the sequence is NTLIKIIGNSVGALGN. A helical transmembrane segment spans residues 799–819; sequence LTIILAIIVFVFALVGKQLLG. Over 820-843 the chain is Extracellular; sequence ENYRDNRRNISAPNEEWPRWHMHD. Asn-828 is a glycosylation site (N-linked (GlcNAc...) asparagine). An intramembrane region (pore-forming) is located at residues 844-864; it reads FFHSFLIVFRILCGEWIENMW. At 865 to 873 the chain is on the extracellular side; the sequence is ACMEVGQKS. A disulfide bond links Cys-866 and Cys-875. The chain crosses the membrane as a helical span at residues 874–899; that stretch reads ICLILFLTVMVLGNLVVLNLFTALLL. The Cytoplasmic portion of the chain corresponds to 900–1154; the sequence is NSFSADNLAT…GWQVRKTCYR (255 aa). A compositionally biased stretch (acidic residues) spans 1015–1026; the sequence is LDDLEEDGEEDS. The interval 1015–1035 is disordered; that stretch reads LDDLEEDGEEDSQSSQQEVIL. Residues 1147-1456 form an III repeat; it reads QVRKTCYRIV…KKYYNAMKKL (310 aa). The chain crosses the membrane as a helical span at residues 1155 to 1178; sequence IVEHSWFESFIIFMILLSSGSLAF. Topologically, residues 1179–1191 are extracellular; sequence EDYHLDQKPTVKA. A helical transmembrane segment spans residues 1192–1217; that stretch reads LLEYTDRMFTFIFVLEMLLKWVAYGF. Topologically, residues 1218–1223 are cytoplasmic; sequence KKYFTN. The helical transmembrane segment at 1224-1245 threads the bilayer; it reads AWCWLDFLIVNISLISLIAKIL. At 1246 to 1249 the chain is on the extracellular side; sequence QYSD. A helical; Voltage-sensor transmembrane segment spans residues 1250–1271; it reads VASIKALRTLRALRPLRALSRF. At 1272 to 1290 the chain is on the cytoplasmic side; it reads EGMRVVVDALVGAIPSIMN. The helical transmembrane segment at 1291–1318 threads the bilayer; it reads VLLVCLIFWLIFSTMGVNFFAGKFGRCI. Asn-1319, Asn-1335, and Asn-1343 each carry an N-linked (GlcNAc...) asparagine glycan. The Extracellular segment spans residues 1319–1360; that stretch reads NKTNEYFSLVPLSIVNNISDCKYQNHTGSFFWVNVKVNFDNV. Residues 1361–1382 constitute an intramembrane region (pore-forming); it reads AMGYLALLQVATFKGWMDIMYA. Residues 1383 to 1398 lie on the Extracellular side of the membrane; sequence AVDARDVNLQPKWEDN. A helical transmembrane segment spans residues 1399-1425; the sequence is VYMYLYFVIFIIFGGFFTLNLFVGVII. Residues 1426 to 1478 lie on the Cytoplasmic side of the membrane; it reads DNFNQQKKKLGGQDIFMTEEQKKYYNAMKKLGSKKPQKPIPRPLNKYQGFVFD. Phosphoserine; by PKC is present on Ser-1458. An IV repeat occupies 1465 to 1764; sequence IPRPLNKYQG…WEKFDPEATQ (300 aa). A helical transmembrane segment spans residues 1479-1502; sequence IVTKQAFDIVIMVLICLNMITMMV. Residues 1503–1513 lie on the Extracellular side of the membrane; the sequence is ETDEQSAEKTK. A helical membrane pass occupies residues 1514 to 1537; it reads ILNKINQFFVAVFTGECVMKMFAL. The Cytoplasmic segment spans residues 1538 to 1543; sequence RHYYFT. The chain crosses the membrane as a helical span at residues 1544–1567; sequence NGWNVFDFIVVVLSIGSLVFSVIL. The Extracellular portion of the chain corresponds to 1568 to 1579; sequence TSLENYFSPTLF. A helical; Voltage-sensor transmembrane segment spans residues 1580–1601; it reads RVIRLARIGRILRLIRAAKGIR. Topologically, residues 1602–1616 are cytoplasmic; sequence TLLFALMMSLPALFN. Residues 1617–1639 traverse the membrane as a helical segment; that stretch reads IGLLLFLVMFIYSIFGMASFPHV. Residues 1640-1653 are Extracellular-facing; that stretch reads SWEAGIDDMFNFQT. Positions 1654–1676 form an intramembrane region, pore-forming; that stretch reads FANSMLCLFQITTSAGWDGLLSP. Residues 1677-1704 lie on the Extracellular side of the membrane; sequence ILNTGPPYCDPNLPNSNGSRGNCGSPAV. Residue Asn-1693 is glycosylated (N-linked (GlcNAc...) asparagine). The chain crosses the membrane as a helical span at residues 1705–1729; it reads GILFFTTYIIISFLIVVNMYIAVIL. Residues 1730–1962 lie on the Cytoplasmic side of the membrane; the sequence is ENFNVATQES…TSKKVTAPGP (233 aa). The region spanning 1858-1887 is the IQ domain; it reads EDISATVIQKAYRSYVLHRSMTISNPPAVP. The interval 1914 to 1962 is disordered; sequence KSETASAASFPPSYDSVTRGLSDQINMSTSSSMQNEDEGTSKKVTAPGP. Residues 1928 to 1947 show a composition bias toward polar residues; the sequence is DSVTRGLSDQINMSTSSSMQ.

The protein belongs to the sodium channel (TC 1.A.1.10) family. Nav1.8/SCN10A subfamily. In terms of assembly, the channel consists of an ion conducting pore forming alpha-subunit regulated by one or more associated auxiliary subunits SCN1B, SCN2B and SCN3B; electrophysiological properties may vary depending on the type of the associated beta subunits. Found in a number of complexes with PRX, DYNLT1 and PDZD2. Interacts with proteins such as FSTL1, PRX, DYNLT1, PDZD2, S100A10 and many others. Interacts with NEDD4 and NEDD4L. Post-translationally, ubiquitinated by NEDD4L; which promotes its endocytosis. Phosphorylation at Ser-1458 by PKC in a highly conserved cytoplasmic loop slows inactivation of the sodium channel and reduces peak sodium currents. In terms of processing, lacks the cysteine which covalently binds the conotoxin GVIIJ. This cysteine (position 825) is speculated in other sodium channel subunits alpha to be implied in covalent binding with the sodium channel subunit beta-2 or beta-4. Expressed in nodose ganglia, but not in cortex, hippocampus, cerebellum, liver, heart and skeletal muscle.

The protein resides in the cell membrane. It carries out the reaction Na(+)(in) = Na(+)(out). Its function is as follows. Tetrodotoxin-resistant channel that mediates the voltage-dependent sodium ion permeability of excitable membranes. Assuming opened or closed conformations in response to the voltage difference across the membrane, the protein forms a sodium-selective channel through which sodium ions may pass in accordance with their electrochemical gradient. Plays a role in neuropathic pain mechanisms. The polypeptide is Sodium channel protein type 10 subunit alpha (SCN10A) (Canis lupus familiaris (Dog)).